The primary structure comprises 338 residues: Ribosomal RNA small subunit methyltransferase C (338 aa).

The protein belongs to the methyltransferase superfamily. RsmC family. Monomer.

The protein resides in the cytoplasm. It catalyses the reaction guanosine(1207) in 16S rRNA + S-adenosyl-L-methionine = N(2)-methylguanosine(1207) in 16S rRNA + S-adenosyl-L-homocysteine + H(+). Functionally, specifically methylates the guanine in position 1207 of 16S rRNA in the 30S particle. This chain is Ribosomal RNA small subunit methyltransferase C, found in Acinetobacter baylyi (strain ATCC 33305 / BD413 / ADP1).